Reading from the N-terminus, the 244-residue chain is 2,3-bisphosphoglycerate-dependent phosphoglycerate mutase (244 aa).

Residues 8-15, 21-22, arginine 60, 87-90, lysine 98, 114-115, and 181-182 each bind substrate; these read RHGESNWN, TG, ERHY, RR, and GN. Residue histidine 9 is the Tele-phosphohistidine intermediate of the active site. The Proton donor/acceptor role is filled by glutamate 87.

Belongs to the phosphoglycerate mutase family. BPG-dependent PGAM subfamily.

The catalysed reaction is (2R)-2-phosphoglycerate = (2R)-3-phosphoglycerate. It functions in the pathway carbohydrate degradation; glycolysis; pyruvate from D-glyceraldehyde 3-phosphate: step 3/5. Catalyzes the interconversion of 2-phosphoglycerate and 3-phosphoglycerate. This Frankia alni (strain DSM 45986 / CECT 9034 / ACN14a) protein is 2,3-bisphosphoglycerate-dependent phosphoglycerate mutase.